A 505-amino-acid chain; its full sequence is Ion-translocating oxidoreductase complex subunit C (505 aa).

2 consecutive 4Fe-4S ferredoxin-type domains span residues 381–410 and 420–449; these read ELNN…EQLY and KTQI…MSYY. [4Fe-4S] cluster-binding residues include cysteine 390, cysteine 393, cysteine 396, cysteine 400, cysteine 429, cysteine 432, cysteine 435, and cysteine 439.

It belongs to the 4Fe4S bacterial-type ferredoxin family. RnfC subfamily. As to quaternary structure, the complex is composed of six subunits: RnfA, RnfB, RnfC, RnfD, RnfE and RnfG. The cofactor is [4Fe-4S] cluster.

The protein localises to the cell inner membrane. Its function is as follows. Part of a membrane-bound complex that couples electron transfer with translocation of ions across the membrane. This chain is Ion-translocating oxidoreductase complex subunit C, found in Buchnera aphidicola subsp. Baizongia pistaciae (strain Bp).